The sequence spans 109 residues: uncharacterized protein (109 aa).

Positions 1–23 (MKNYNFILISLFIIFFIILNISS) are cleaved as a signal peptide. Asn-27 carries N-linked (GlcNAc...) asparagine glycosylation. The segment at 45–109 (YQEYMENRTP…KKDQQNQQQN (65 aa)) is disordered. Residues 54–72 (PNEQQQQQQQQQNNNNPPQ) show a composition bias toward low complexity. The span at 94 to 103 (KLKEKLKKDQ) shows a compositional bias: basic and acidic residues.

The protein resides in the secreted. This is an uncharacterized protein from Dictyostelium discoideum (Social amoeba).